The sequence spans 405 residues: Arginine deiminase (405 aa).

Cys-395 functions as the Amidino-cysteine intermediate in the catalytic mechanism.

Belongs to the arginine deiminase family.

It localises to the cytoplasm. The enzyme catalyses L-arginine + H2O = L-citrulline + NH4(+). It functions in the pathway amino-acid degradation; L-arginine degradation via ADI pathway; carbamoyl phosphate from L-arginine: step 1/2. This Rhodococcus opacus (strain B4) protein is Arginine deiminase.